Reading from the N-terminus, the 273-residue chain is Bis(5'-nucleosyl)-tetraphosphatase, symmetrical (273 aa).

This sequence belongs to the Ap4A hydrolase family.

It carries out the reaction P(1),P(4)-bis(5'-adenosyl) tetraphosphate + H2O = 2 ADP + 2 H(+). Functionally, hydrolyzes diadenosine 5',5'''-P1,P4-tetraphosphate to yield ADP. This is Bis(5'-nucleosyl)-tetraphosphatase, symmetrical (apaH) from Buchnera aphidicola subsp. Schizaphis graminum (strain Sg).